Here is a 74-residue protein sequence, read N- to C-terminus: Protein F9 homolog (74 aa).

Residues glycine 1–proline 34 lie on the Virion surface side of the membrane. The helical transmembrane segment at tryptophan 35–leucine 55 threads the bilayer. The Intravirion segment spans residues arginine 56–arginine 73.

Belongs to the chordopoxvirinae L1 protein family.

The protein localises to the virion membrane. This Capra hircus (Goat) protein is Protein F9 homolog.